Reading from the N-terminus, the 1070-residue chain is Phosphatidylinositol 4,5-bisphosphate 3-kinase catalytic subunit beta isoform (1070 aa).

The PI3K-ABD domain maps to 26 to 115; it reads SDGSISVDFL…LPVLKLVTRS (90 aa). Residues 194–285 form the PI3K-RBD domain; that stretch reads GGKLVVAVHF…RTLPHFILVE (92 aa). Ser-324 carries the phosphoserine modification. The C2 PI3K-type domain maps to 327-496; that stretch reads WGNNNPFQIV…NATALHIKFP (170 aa). The Nuclear localization signal (NLS) signature appears at 410–418; sequence KVKTKKSTK. The PIK helical domain occupies 524-701; it reads ANVSSRGGKK…GVILEAYCRG (178 aa). In terms of domain architecture, PI3K/PI4K catalytic spans 772–1053; it reads YVEKCRYMDS…KFDEALRESW (282 aa). Residues 778–784 are G-loop; sequence YMDSKMK. The interval 916 to 924 is catalytic loop; the sequence is GIGDRHSDN. The segment at 935-961 is activation loop; that stretch reads HIDFGHILGNFKSKFGIKRERVPFILT. Ser-1070 is subject to Phosphoserine; by autocatalysis.

Belongs to the PI3/PI4-kinase family. As to quaternary structure, heterodimer of a catalytic subunit PIK3CB and a p85 regulatory subunit (PIK3R1, PIK3R2 or PIK3R3). Interaction with PIK3R2 is required for nuclear localization and nuclear export. Part of a complex with PIK3R1 and PTEN. Binding to PTEN may antagonize the lipid kinase activity under normal growth conditions. Part of a complex involved in autophagosome formation composed of PIK3C3 and PIK3R4. Interacts with BECN1, ATG14 and RAB5A. In terms of processing, autophosphorylation at Ser-1070 negatively regulates the phosphatidylinositol-4,5-bisphosphate 3-kinase activity.

Its subcellular location is the cytoplasm. It localises to the nucleus. The catalysed reaction is a 1,2-diacyl-sn-glycero-3-phospho-(1D-myo-inositol-4,5-bisphosphate) + ATP = a 1,2-diacyl-sn-glycero-3-phospho-(1D-myo-inositol-3,4,5-trisphosphate) + ADP + H(+). It carries out the reaction 1-octadecanoyl-2-(5Z,8Z,11Z,14Z)-eicosatetraenoyl-sn-glycero-3-phospho-1D-myo-inositol 4,5-bisphosphate + ATP = 1-octadecanoyl-2-(5Z,8Z,11Z,14Z-eicosatetraenoyl)-sn-glycero-3-phospho-(1D-myo-inositol 3,4,5-triphosphate) + ADP + H(+). It catalyses the reaction L-seryl-[protein] + ATP = O-phospho-L-seryl-[protein] + ADP + H(+). It functions in the pathway phospholipid metabolism; phosphatidylinositol phosphate biosynthesis. Functionally, phosphoinositide-3-kinase (PI3K) phosphorylates phosphatidylinositol (PI) derivatives at position 3 of the inositol ring to produce 3-phosphoinositides. Uses ATP and PtdIns(4,5)P2 (phosphatidylinositol 4,5-bisphosphate) to generate phosphatidylinositol 3,4,5-trisphosphate (PIP3). PIP3 plays a key role by recruiting PH domain-containing proteins to the membrane, including AKT1 and PDPK1, activating signaling cascades involved in cell growth, survival, proliferation, motility and morphology. Involved in the activation of AKT1 upon stimulation by G-protein coupled receptors (GPCRs) ligands such as CXCL12, sphingosine 1-phosphate, and lysophosphatidic acid. May also act downstream receptor tyrosine kinases. Required in different signaling pathways for stable platelet adhesion and aggregation. Plays a role in platelet activation signaling triggered by GPCRs, alpha-IIb/beta-3 integrins (ITGA2B/ ITGB3) and ITAM (immunoreceptor tyrosine-based activation motif)-bearing receptors such as GP6. Regulates the strength of adhesion of ITGA2B/ ITGB3 activated receptors necessary for the cellular transmission of contractile forces. Required for platelet aggregation induced by F2 (thrombin) and thromboxane A2 (TXA2). Has a role in cell survival. May have a role in cell migration. Involved in the early stage of autophagosome formation. Modulates the intracellular level of PtdIns3P (phosphatidylinositol 3-phosphate) and activates PIK3C3 kinase activity. May act as a scaffold, independently of its lipid kinase activity to positively regulate autophagy. May have a role in insulin signaling as scaffolding protein in which the lipid kinase activity is not required. May have a kinase-independent function in regulating cell proliferation and in clathrin-mediated endocytosis. Mediator of oncogenic signal in cell lines lacking PTEN. The lipid kinase activity is necessary for its role in oncogenic transformation. Required for the growth of ERBB2 and RAS driven tumors. Also has a protein kinase activity showing autophosphorylation. In Rattus norvegicus (Rat), this protein is Phosphatidylinositol 4,5-bisphosphate 3-kinase catalytic subunit beta isoform (Pik3cb).